A 78-amino-acid polypeptide reads, in one-letter code: uncharacterized protein (78 aa).

This is an uncharacterized protein from Helicobacter pylori (strain J99 / ATCC 700824) (Campylobacter pylori J99).